We begin with the raw amino-acid sequence, 122 residues long: UPF0102 protein R00337 (122 aa).

The protein belongs to the UPF0102 family.

This chain is UPF0102 protein R00337, found in Rhizobium meliloti (strain 1021) (Ensifer meliloti).